A 457-amino-acid chain; its full sequence is ATP synthase subunit beta (457 aa).

Residue 150–157 (GGAGVGKT) coordinates ATP.

This sequence belongs to the ATPase alpha/beta chains family. In terms of assembly, F-type ATPases have 2 components, CF(1) - the catalytic core - and CF(0) - the membrane proton channel. CF(1) has five subunits: alpha(3), beta(3), gamma(1), delta(1), epsilon(1). CF(0) has three main subunits: a(1), b(2) and c(9-12). The alpha and beta chains form an alternating ring which encloses part of the gamma chain. CF(1) is attached to CF(0) by a central stalk formed by the gamma and epsilon chains, while a peripheral stalk is formed by the delta and b chains.

It is found in the cell membrane. The catalysed reaction is ATP + H2O + 4 H(+)(in) = ADP + phosphate + 5 H(+)(out). Its function is as follows. Produces ATP from ADP in the presence of a proton gradient across the membrane. The catalytic sites are hosted primarily by the beta subunits. This Baumannia cicadellinicola subsp. Homalodisca coagulata protein is ATP synthase subunit beta.